A 568-amino-acid polypeptide reads, in one-letter code: Phosphoprotein (568 aa).

The disordered stretch occupies residues 1 to 24 (MDQDAFFFERDPEAEGEAPRKQES). A compositionally biased stretch (basic and acidic residues) spans 7–23 (FFERDPEAEGEAPRKQE). Residues 33-41 (DVVLSYKPT) form an N0 binding region. Residues 45–324 (EDRSWLHGII…ANEEETSNTS (280 aa)) form a disordered region. The span at 58–105 (EENKPSCKADDNNKDRAISTPTQDHRSGEESGISRRTSESKTETHARL) shows a compositional bias: basic and acidic residues. Residues 107–121 (DQQSIHRASRRGTSP) show a composition bias toward polar residues. Basic and acidic residues-rich tracts occupy residues 132 to 144 (RNTR…PNER) and 151 to 167 (LTDE…KREE). Polar residues predominate over residues 190–208 (RTNNNGRSMETSSTHSTRI). A compositionally biased stretch (basic and acidic residues) spans 239 to 253 (TRSERTQNSELHKST). Residues 294-305 (YTMNNANNNTKS) are compositionally biased toward polar residues. The tract at residues 344–411 (FELSRSASHV…SSRDLHKRFS (68 aa)) is multimerization. Residues 387–416 (EENRTLLKQIQEEINSSRDLHKRFSEYQKE) are a coiled coil. The segment at 412-445 (EYQKEQNSLMMANLSTLHIITDRGGKTGDPSDTT) is l protein binding. The tract at residues 434–455 (RGGKTGDPSDTTRSPSVFTKGK) is disordered. Positions 441–450 (PSDTTRSPSV) are enriched in polar residues. The interval 479-568 (DLIREDELRD…FEEDIDSLTN (90 aa)) is interaction with the nucleocapsid (N-RNA).

This sequence belongs to the respirovirus P protein family. In terms of assembly, homotetramer. Interacts (via multimerization domain) with polymerase L; this interaction forms the polymerase complex. Interacts (via N-terminus) with N0; this interaction allows P to chaperon N0 before encapsidation and form the N-P complex. Interacts (via C-terminus) with N-RNA template; this interaction positions the polymerase on the template.

Essential cofactor of the RNA polymerase L that plays a central role in the transcription and replication by forming the polymerase complex with RNA polymerase L and recruiting L to the genomic N-RNA template for RNA synthesis. Also plays a central role in the encapsidation of nascent RNA chains by forming the encapsidation complex with the nucleocapsid protein N (N-P complex). Acts as a chaperone for newly synthesized free N protein, so-called N0, allowing encapsidation of nascent RNA chains during replication. The nucleoprotein protein N prevents excessive phosphorylation of P, which leads to down-regulation of viral transcription/ replication. Participates, together with N, in the formation of viral factories (viroplasms), which are large inclusions in the host cytoplasm where replication takes place. Recruits host PI4KB and remodel the host endoplasmic reticulum membrane to form viral replication factories. This chain is Phosphoprotein (P/C), found in Human parainfluenza 1 virus (strain C39) (HPIV-1).